The sequence spans 139 residues: MHPLTLPKQSRVLKRKQFLYITRSGFCCRGSQATFYVVPSRHPGTCRMGITVSKKFGKAHERNSFKRVVREVFRHVRHQLPNCQIVVFPKGHKQRPVFSKLLQDFINQIPEGLHRLGKTKATTGGECTPKSEKCVTAPR.

Residues 120–139 (KATTGGECTPKSEKCVTAPR) form a disordered region.

Belongs to the RnpA family. Consists of a catalytic RNA component (M1 or rnpB) and a protein subunit.

It carries out the reaction Endonucleolytic cleavage of RNA, removing 5'-extranucleotides from tRNA precursor.. In terms of biological role, RNaseP catalyzes the removal of the 5'-leader sequence from pre-tRNA to produce the mature 5'-terminus. It can also cleave other RNA substrates such as 4.5S RNA. The protein component plays an auxiliary but essential role in vivo by binding to the 5'-leader sequence and broadening the substrate specificity of the ribozyme. This Chlamydia pneumoniae (Chlamydophila pneumoniae) protein is Ribonuclease P protein component.